A 431-amino-acid polypeptide reads, in one-letter code: uncharacterized protein (431 aa).

2 disordered regions span residues 17-66 (VDPE…GQQA) and 81-415 (GSVT…ALPR). The segment covering 91–106 (DKADREPAARPRDPRS) has biased composition (basic and acidic residues). The span at 173–195 (TYRRRRPTAATPSRKKKARRGPK) shows a compositional bias: basic residues. Residues 235 to 244 (RTPGPVHSAA) are compositionally biased toward low complexity. The span at 299-312 (RMGGSSGGRGGTPG) shows a compositional bias: gly residues. Over residues 317-342 (RAAPGARPTAPDGAPGRWDGPADGPA) the composition is skewed to low complexity. Gly residues predominate over residues 343–360 (PGLGRGGWGVGREAGGSG).

This is an uncharacterized protein from Homo sapiens (Human).